The chain runs to 335 residues: MFLDQITIELRAGKGGNGVVAWRKEKYLPKGGPYGGNGGVGGSIIIESATHVYSFESYRNIRFLKAEDGQSGATNNRSGRNGKDLVLVVPEGTLLRDVETREIIYDFAKDGERLVICRGGKGGKGNTFFKTSTNRAPTKATPGKPGEVRQVELELKLIADIGLVGFPNAGKSTLFNTLAKTEVKVGAYPFTTLQPVLGLVPCREKLYQKPWIIADIPGIIEGAHQNRGLGLDFLRHIERTRLLLFVVDICGCERSSPEEDLRILMDELLHYKEDLADKGRIIALNKIDDLLPDERQERLENFQRLFPSEQFVMLSGLTGEGVDLLNSLFTNRLSV.

Positions 1-158 (MFLDQITIEL…RQVELELKLI (158 aa)) constitute an Obg domain. The 176-residue stretch at 159-334 (ADIGLVGFPN…LNSLFTNRLS (176 aa)) folds into the OBG-type G domain. GTP is bound by residues 165-172 (GFPNAGKS), 190-194 (FTTLQ), 215-218 (DIPG), 285-288 (NKID), and 315-317 (SGL). S172 and T192 together coordinate Mg(2+).

Belongs to the TRAFAC class OBG-HflX-like GTPase superfamily. OBG GTPase family. Monomer. The cofactor is Mg(2+).

It is found in the cytoplasm. In terms of biological role, an essential GTPase which binds GTP, GDP and possibly (p)ppGpp with moderate affinity, with high nucleotide exchange rates and a fairly low GTP hydrolysis rate. Plays a role in control of the cell cycle, stress response, ribosome biogenesis and in those bacteria that undergo differentiation, in morphogenesis control. The chain is GTPase Obg from Chlamydia caviae (strain ATCC VR-813 / DSM 19441 / 03DC25 / GPIC) (Chlamydophila caviae).